The primary structure comprises 392 residues: L-rhamnonate dehydratase (392 aa).

Substrate is bound by residues H22 and R48. Residues D214, E240, and E268 each coordinate Mg(2+). H318 functions as the Proton acceptor in the catalytic mechanism. E338 serves as a coordination point for substrate.

This sequence belongs to the mandelate racemase/muconate lactonizing enzyme family. RhamD subfamily. In terms of assembly, homooctamer; tetramer of dimers. Mg(2+) serves as cofactor.

It carries out the reaction L-rhamnonate = 2-dehydro-3-deoxy-L-rhamnonate + H2O. Catalyzes the dehydration of L-rhamnonate to 2-keto-3-deoxy-L-rhamnonate (KDR). This Burkholderia ambifaria (strain MC40-6) protein is L-rhamnonate dehydratase.